The sequence spans 874 residues: MGISSIVTKETLKKKETNIEVQENNMNDLVKSASRVIAPLWPIATFAAHHPWMGLEKQSFEQVADWLKEIRNVDIYPSASMIHSAKAKGEIEELFLQSGLSRWLDSQSFHIPREKAERFCQEALKLERLPSSLLSSPELNKLAEEISYINTGGMKDSSLQLISSLIEDQKGENLSDILNYHIIKWCKLYLDDSGASWTMPNREKGLYRAWHHLITFDPALSKNERKVLKDWPQDAQGALTKALSELGISESNKQAYLEGHLLALPGWAGMIRWRSQQSIQEQELMIEYLAVRISMELAIVKPYLPIKNQKIEKKVEVVPLIASWIYWGDISIEEWLQMSATEQSELLAFAYRFDENIRKKLWLEAWEQTHAEQLREKIASKQRATNDKKHVLAQLAFCIDVRSEPFRRHLEKLGPFETFGIAGFFGLPIATSELGSNDSYPSLPVILKPKHQIKELADEKEFKNYKQRKKIDSSVSYTFKTMKQNVLTSMLLPEVSGPLLGLQMVTRSFVPRRVGSFIRNLRKTMLQKPDTTFSLNHVHDTKCEIPIGFTKEEKVNYVRQTLKMVGLTEKFAPLVVMCGHSSQSTNNPYAAALECGACGGAAGGFNARVFATLCNLPEVREALSAEGIKIPEDTIFVAAEHKTTVDELEWIYVPKLSEAAQEAFDRIESVMPNVSQHANRERLTQLPNFKTKIKNPSKEAHRFAEDWSEIRPEWGLARNASFIIGQRELTQDCDLEGRAFLHNYDWKQDESGDILASIIAGPGTVAQWINLQYYASTVAPHYYGSGNKTTQTVTSGLGVMQGNASDLLSGLPWQSVMQSDNETYHSPLRLLIVIQAPTKYIERLLKNDFTFREKVKNGWVRLASVDPEGQWKNW.

Positions 398, 400, 580, and 595 each coordinate Zn(2+).

This sequence belongs to the inorganic carbon transporter (TC 9.A.2) DabA family. As to quaternary structure, forms a complex with DabB. Zn(2+) is required as a cofactor.

Its subcellular location is the cell membrane. Its function is as follows. Part of an energy-coupled inorganic carbon pump. In Bacillus cereus (strain ATCC 10987 / NRS 248), this protein is Probable inorganic carbon transporter subunit DabA.